Consider the following 286-residue polypeptide: Small ribosomal subunit protein uS3 (286 aa).

Residues 39 to 107 (VREYLKKKLA…PVHVNIEEIR (69 aa)) form the KH type-2 domain. Residues 213-286 (QAGAGTAAPQ…KPGVNDAAAS (74 aa)) form a disordered region. Positions 241–262 (GRADARSDGKAGEKKGPRKSDN) are enriched in basic and acidic residues.

Belongs to the universal ribosomal protein uS3 family. Part of the 30S ribosomal subunit. Forms a tight complex with proteins S10 and S14.

In terms of biological role, binds the lower part of the 30S subunit head. Binds mRNA in the 70S ribosome, positioning it for translation. The chain is Small ribosomal subunit protein uS3 from Nitrosospira multiformis (strain ATCC 25196 / NCIMB 11849 / C 71).